The sequence spans 509 residues: Putative thymidine phosphorylase (509 aa).

This sequence belongs to the thymidine/pyrimidine-nucleoside phosphorylase family. Type 2 subfamily.

The catalysed reaction is thymidine + phosphate = 2-deoxy-alpha-D-ribose 1-phosphate + thymine. This Bradyrhizobium sp. (strain ORS 278) protein is Putative thymidine phosphorylase.